The chain runs to 591 residues: V-type ATP synthase alpha chain (591 aa).

ATP is bound at residue 242-249 (GPFGAGKT).

It belongs to the ATPase alpha/beta chains family.

The enzyme catalyses ATP + H2O + 4 H(+)(in) = ADP + phosphate + 5 H(+)(out). In terms of biological role, produces ATP from ADP in the presence of a proton gradient across the membrane. The V-type alpha chain is a catalytic subunit. The protein is V-type ATP synthase alpha chain (atpA) of Chlamydia pneumoniae (Chlamydophila pneumoniae).